Here is a 1223-residue protein sequence, read N- to C-terminus: A disintegrin and metalloproteinase with thrombospondin motifs 14 (1223 aa).

Residues 1–22 (MAPLRALLSYLLPLHCALCAAA) form the signal peptide. Residues 23–252 (GSRTPELHLS…QLGDTERKRR (230 aa)) constitute a propeptide that is removed on maturation. N-linked (GlcNAc...) asparagine glycosylation occurs at Asn-109. Positions 259–460 (YSIEVLLVVD…PSYDCLLDDP (202 aa)) constitute a Peptidase M12B domain. Intrachain disulfides connect Cys-336/Cys-382, Cys-376/Cys-455, and Cys-415/Cys-441. His-398 serves as a coordination point for Zn(2+). Residue Glu-399 is part of the active site. Residues His-402 and His-408 each coordinate Zn(2+). In terms of domain architecture, Disintegrin spans 461 to 551 (FDPAWPQPPE…WKSPEQTYGQ (91 aa)). Asn-475 carries N-linked (GlcNAc...) asparagine glycosylation. 7 disulfides stabilise this stretch: Cys-482–Cys-507, Cys-493–Cys-516, Cys-502–Cys-535, Cys-529–Cys-540, Cys-564–Cys-601, Cys-568–Cys-606, and Cys-579–Cys-591. The region spanning 552 to 607 (DGGWSSWTKFGSCSRSCGGGVRSRSRSCNNPSPAYGGRLCLGPMFEYQVCNSEECP) is the TSP type-1 1 domain. Residues 730-846 (LKLVQIPAGA…GSNNVLLEEM (117 aa)) are spacer. 3 TSP type-1 domains span residues 847–907 (DTYE…HPCS), 908–967 (QPVW…LRVP), and 968–1022 (CPAQ…PACG). N-linked (GlcNAc...) asparagine glycosylation is present at Asn-941. Intrachain disulfides connect Cys-980-Cys-1016, Cys-984-Cys-1021, and Cys-995-Cys-1005. Asn-1027 carries an N-linked (GlcNAc...) asparagine glycan. The PLAC domain maps to 1059-1097 (STEPCTGDRSVFCQMEVLDRYCSIPGYHRLCCVSCIKKA). The disordered stretch occupies residues 1100-1223 (PNPGPDPGPT…TSLPAASPVT (124 aa)). Positions 1101 to 1125 (NPGPDPGPTSLPPFSTPGSPLPGPQ) are enriched in pro residues. Positions 1199–1211 (PEDKGQPGEDLRH) are enriched in basic and acidic residues.

In terms of processing, the precursor is cleaved by a furin endopeptidase. Post-translationally, glycosylated. Can be O-fucosylated by POFUT2 on a serine or a threonine residue found within the consensus sequence C1-X(2)-(S/T)-C2-G of the TSP type-1 repeat domains where C1 and C2 are the first and second cysteine residue of the repeat, respectively. Fucosylated repeats can then be further glycosylated by the addition of a beta-1,3-glucose residue by the glucosyltransferase, B3GALTL. Fucosylation mediates the efficient secretion of ADAMTS family members. Can also be C-glycosylated with one or two mannose molecules on tryptophan residues within the consensus sequence W-X-X-W of the TPRs, and N-glycosylated. These other glycosylations can also facilitate secretion. Expressed in retina and at low levels in brain, lung and placenta. High expression in fetal tissues.

Its subcellular location is the secreted. The protein resides in the extracellular space. It is found in the extracellular matrix. Functionally, has aminoprocollagen type I processing activity in the absence of ADAMTS2. Seems to be synthesized as a latent enzyme that requires activation to display aminoprocollagen peptidase activity. Cleaves lysyl oxidase LOX at a site downstream of its propeptide cleavage site to produce a short LOX form. This Homo sapiens (Human) protein is A disintegrin and metalloproteinase with thrombospondin motifs 14 (ADAMTS14).